The following is a 388-amino-acid chain: Alanine racemase (388 aa).

Residue Lys39 is the Proton acceptor; specific for D-alanine of the active site. Lys39 bears the N6-(pyridoxal phosphate)lysine mark. The residue at position 129 (Lys129) is an N6-carboxylysine. Arg136 contributes to the substrate binding site. The Proton acceptor; specific for L-alanine role is filled by Tyr265. Met312 is a substrate binding site.

The protein belongs to the alanine racemase family. As to quaternary structure, homodimer. It depends on pyridoxal 5'-phosphate as a cofactor.

The enzyme catalyses L-alanine = D-alanine. Its pathway is amino-acid biosynthesis; D-alanine biosynthesis; D-alanine from L-alanine: step 1/1. Inhibited by acetate and propionate. Irreversibly inhibited by cycloserine. In terms of biological role, catalyzes the interconversion of L-alanine and D-alanine. Also weakly active on serine. The chain is Alanine racemase (alr) from Geobacillus stearothermophilus (Bacillus stearothermophilus).